Reading from the N-terminus, the 598-residue chain is Beta-hexosaminidase A (598 aa).

The signal sequence occupies residues 1–11; it reads MSFITSAHATA. Residue Asp305 is part of the active site.

This sequence belongs to the glycosyl hydrolase 3 family.

It catalyses the reaction Hydrolysis of terminal non-reducing N-acetyl-D-hexosamine residues in N-acetyl-beta-D-hexosaminides.. In terms of biological role, most active towards p-nitrophenyl-N-acetyl-beta-D-glucosaminide(PNP-beta-GlcNAc) and diacetylchitobiose. The sequence is that of Beta-hexosaminidase A (cht60) from Pseudoalteromonas piscicida.